The chain runs to 127 residues: Fluoride-specific ion channel FluC (127 aa).

A run of 4 helical transmembrane segments spans residues 4-24, 35-55, 71-91, and 103-123; these read LLLA…LLSM, LGTL…FAWF, TGFC…VFLL, and VFVN…LFSA. The Na(+) site is built by Gly-75 and Thr-78.

Belongs to the fluoride channel Fluc/FEX (TC 1.A.43) family.

It localises to the cell inner membrane. The catalysed reaction is fluoride(in) = fluoride(out). Na(+) is not transported, but it plays an essential structural role and its presence is essential for fluoride channel function. In terms of biological role, fluoride-specific ion channel. Important for reducing fluoride concentration in the cell, thus reducing its toxicity. This Escherichia coli (strain ATCC 8739 / DSM 1576 / NBRC 3972 / NCIMB 8545 / WDCM 00012 / Crooks) protein is Fluoride-specific ion channel FluC.